Consider the following 114-residue polypeptide: Iron-sulfur cluster insertion protein ErpA (114 aa).

Iron-sulfur cluster is bound by residues Cys42, Cys106, and Cys108.

This sequence belongs to the HesB/IscA family. As to quaternary structure, homodimer. Iron-sulfur cluster is required as a cofactor.

Its function is as follows. Required for insertion of 4Fe-4S clusters for at least IspG. This chain is Iron-sulfur cluster insertion protein ErpA, found in Pasteurella multocida (strain Pm70).